Consider the following 61-residue polypeptide: MAKKALVHKANKKPKFAVRAYTRCNKCGRPHSVYRKFGLCRICLREMAHAGELPGVQKSSW.

Positions 24, 27, 40, and 43 each coordinate Zn(2+).

This sequence belongs to the universal ribosomal protein uS14 family. Zinc-binding uS14 subfamily. Part of the 30S ribosomal subunit. Contacts proteins S3 and S10. It depends on Zn(2+) as a cofactor.

In terms of biological role, binds 16S rRNA, required for the assembly of 30S particles and may also be responsible for determining the conformation of the 16S rRNA at the A site. The protein is Small ribosomal subunit protein uS14B of Mycolicibacterium smegmatis (strain ATCC 700084 / mc(2)155) (Mycobacterium smegmatis).